A 95-amino-acid chain; its full sequence is Large ribosomal subunit protein bL25 (95 aa).

This sequence belongs to the bacterial ribosomal protein bL25 family. In terms of assembly, part of the 50S ribosomal subunit; part of the 5S rRNA/L5/L18/L25 subcomplex. Contacts the 5S rRNA. Binds to the 5S rRNA independently of L5 and L18.

Functionally, this is one of the proteins that binds to the 5S RNA in the ribosome where it forms part of the central protuberance. This is Large ribosomal subunit protein bL25 from Haemophilus influenzae (strain ATCC 51907 / DSM 11121 / KW20 / Rd).